The sequence spans 689 residues: DNA ligase (689 aa).

Residues 51–55 (DSEYD), 100–101 (SL), and glutamate 129 contribute to the NAD(+) site. Lysine 131 acts as the N6-AMP-lysine intermediate in catalysis. NAD(+) is bound by residues arginine 152, glutamate 189, lysine 308, and lysine 332. Zn(2+)-binding residues include cysteine 426, cysteine 429, cysteine 444, and cysteine 450. Residues 609-689 (ADEQPLKGQT…ELLALLAANR (81 aa)) form the BRCT domain.

The protein belongs to the NAD-dependent DNA ligase family. LigA subfamily. Requires Mg(2+) as cofactor. It depends on Mn(2+) as a cofactor.

It carries out the reaction NAD(+) + (deoxyribonucleotide)n-3'-hydroxyl + 5'-phospho-(deoxyribonucleotide)m = (deoxyribonucleotide)n+m + AMP + beta-nicotinamide D-nucleotide.. DNA ligase that catalyzes the formation of phosphodiester linkages between 5'-phosphoryl and 3'-hydroxyl groups in double-stranded DNA using NAD as a coenzyme and as the energy source for the reaction. It is essential for DNA replication and repair of damaged DNA. In Shewanella oneidensis (strain ATCC 700550 / JCM 31522 / CIP 106686 / LMG 19005 / NCIMB 14063 / MR-1), this protein is DNA ligase.